Reading from the N-terminus, the 164-residue chain is UPF0114 protein BCI_0033 (164 aa).

Transmembrane regions (helical) follow at residues 15 to 35, 53 to 73, and 136 to 156; these read LLFP…LKFF, LILI…LVMV, and IMWC…MAYI.

It belongs to the UPF0114 family.

Its subcellular location is the cell membrane. This chain is UPF0114 protein BCI_0033, found in Baumannia cicadellinicola subsp. Homalodisca coagulata.